The sequence spans 308 residues: tRNA pseudouridine synthase B (308 aa).

D45 functions as the Nucleophile in the catalytic mechanism.

This sequence belongs to the pseudouridine synthase TruB family. Type 1 subfamily.

It carries out the reaction uridine(55) in tRNA = pseudouridine(55) in tRNA. Responsible for synthesis of pseudouridine from uracil-55 in the psi GC loop of transfer RNAs. The chain is tRNA pseudouridine synthase B from Gloeothece citriformis (strain PCC 7424) (Cyanothece sp. (strain PCC 7424)).